Consider the following 271-residue polypeptide: Chymotrypsin-like elastase family member 2A (271 aa).

Residues 1-16 (MIRTLLLSALVAGALS) form the signal peptide. A propeptide spans 17–30 (CGYPTYEVQHDVSR) (activation peptide). The region spanning 31 to 269 (VVGGQEASPN…YIDWINSVIA (239 aa)) is the Peptidase S1 domain. A disulfide bridge connects residues C60 and C76. Residues H75 and D123 each act as charge relay system in the active site. Cystine bridges form between C157/C224, C188/C204, and C214/C245. Catalysis depends on S218, which acts as the Charge relay system.

It belongs to the peptidase S1 family. Elastase subfamily. In terms of assembly, interacts with CPA1. Interacts with SERPINA1. As to expression, pancreas.

Its subcellular location is the secreted. The enzyme catalyses Preferential cleavage: Leu-|-Xaa, Met-|-Xaa and Phe-|-Xaa. Hydrolyzes elastin.. Functionally, elastase that enhances insulin signaling and might have a physiologic role in cellular glucose metabolism. Circulates in plasma and reduces platelet hyperactivation, triggers both insulin secretion and degradation, and increases insulin sensitivity. The sequence is that of Chymotrypsin-like elastase family member 2A (Cela2a) from Rattus norvegicus (Rat).